The following is a 483-amino-acid chain: Phosphoenolpyruvate carboxylase (483 aa).

Positions 1–20 are disordered; sequence MKVPRCMSTQHPDNVNPPFF.

It belongs to the PEPCase type 2 family. Homotetramer. Mg(2+) is required as a cofactor.

The enzyme catalyses oxaloacetate + phosphate = phosphoenolpyruvate + hydrogencarbonate. Its activity is regulated as follows. Inhibited by NaCl, KCl, ATP, ADP, GTP and aspartate. Unlike E.coli, not regulated by acetyl-CoA. Catalyzes the irreversible beta-carboxylation of phosphoenolpyruvate (PEP) to form oxaloacetate (OAA), a four-carbon dicarboxylic acid source for the tricarboxylic acid cycle. The polypeptide is Phosphoenolpyruvate carboxylase (ppcA) (Methanothermobacter thermautotrophicus (strain ATCC 29096 / DSM 1053 / JCM 10044 / NBRC 100330 / Delta H) (Methanobacterium thermoautotrophicum)).